The chain runs to 275 residues: Phosphonoacetaldehyde hydrolase (275 aa).

The active-site Nucleophile is aspartate 15. Residues aspartate 15 and alanine 17 each contribute to the Mg(2+) site. Lysine 56 (schiff-base intermediate with substrate) is an active-site residue. Aspartate 189 serves as a coordination point for Mg(2+).

The protein belongs to the HAD-like hydrolase superfamily. PhnX family. Homodimer. Mg(2+) is required as a cofactor.

The enzyme catalyses phosphonoacetaldehyde + H2O = acetaldehyde + phosphate + H(+). Its function is as follows. Involved in phosphonate degradation. This chain is Phosphonoacetaldehyde hydrolase, found in Pseudomonas putida (strain ATCC 700007 / DSM 6899 / JCM 31910 / BCRC 17059 / LMG 24140 / F1).